We begin with the raw amino-acid sequence, 202 residues long: Probable molybdenum cofactor guanylyltransferase (202 aa).

GTP-binding positions include 13–15 (LAG), K25, D71, and D103. D103 provides a ligand contact to Mg(2+).

This sequence belongs to the MobA family. The cofactor is Mg(2+).

It is found in the cytoplasm. The enzyme catalyses Mo-molybdopterin + GTP + H(+) = Mo-molybdopterin guanine dinucleotide + diphosphate. In terms of biological role, transfers a GMP moiety from GTP to Mo-molybdopterin (Mo-MPT) cofactor (Moco or molybdenum cofactor) to form Mo-molybdopterin guanine dinucleotide (Mo-MGD) cofactor. This chain is Probable molybdenum cofactor guanylyltransferase, found in Opitutus terrae (strain DSM 11246 / JCM 15787 / PB90-1).